Here is a 260-residue protein sequence, read N- to C-terminus: 3'-5' ssDNA/RNA exonuclease TatD (260 aa).

E91, H127, and H152 together coordinate a divalent metal cation.

The protein belongs to the metallo-dependent hydrolases superfamily. TatD-type hydrolase family. TatD subfamily. Monomer. Mg(2+) is required as a cofactor. The cofactor is Mn(2+).

The protein resides in the cytoplasm. 3'-5' exonuclease that prefers single-stranded DNA and RNA. May play a role in the H(2)O(2)-induced DNA damage repair. The polypeptide is 3'-5' ssDNA/RNA exonuclease TatD (Escherichia coli (strain K12)).